A 137-amino-acid polypeptide reads, in one-letter code: MNFKYIVAVSILIASAYARREENNIQSLSQRDVLEEESLREIRGIGASILSAGKSALKGFAKGLAEHFANGKRTAEDHEMMKRLEAAVRDLDSLEHPEEASEKETRGFNQEEKEKRIIGPVLGLVGSALGGLLKKIG.

The first 18 residues, 1-18 (MNFKYIVAVSILIASAYA), serve as a signal peptide directing secretion. Asparagine 70 bears the Asparagine amide mark. The segment at 92-112 (DSLEHPEEASEKETRGFNQEE) is disordered. Position 136 is an isoleucine amide (isoleucine 136).

The protein belongs to the bombinin family. As to expression, expressed by the skin glands.

The protein resides in the secreted. Functionally, bombinin-like peptide 2 has antimicrobial activity, but no hemolytic activity. Preliminary evidence indicates that this peptide does not lyse and thus kill the bacteria by its antimicrobial activity. In terms of biological role, bombinin H2 has antibacterial and hemolytic activity. The sequence is that of Bombinin-like peptides 2 from Bombina variegata (Yellow-bellied toad).